A 323-amino-acid polypeptide reads, in one-letter code: ADP-L-glycero-D-manno-heptose-6-epimerase (323 aa).

Residues 10–11 (FI), 31–32 (DN), Lys38, Lys53, 75–79 (EGACS), and Asn92 contribute to the NADP(+) site. The active-site Proton acceptor is the Tyr139. Lys143 is a binding site for NADP(+). Residue Asn168 participates in substrate binding. 2 residues coordinate NADP(+): Val169 and Lys177. Residue Lys177 is the Proton acceptor of the active site. Substrate contacts are provided by residues Asp179, Lys186, 200–203 (FGAY), Arg213, and Tyr277.

It belongs to the NAD(P)-dependent epimerase/dehydratase family. HldD subfamily. In terms of assembly, homopentamer. It depends on NADP(+) as a cofactor.

It catalyses the reaction ADP-D-glycero-beta-D-manno-heptose = ADP-L-glycero-beta-D-manno-heptose. Its pathway is nucleotide-sugar biosynthesis; ADP-L-glycero-beta-D-manno-heptose biosynthesis; ADP-L-glycero-beta-D-manno-heptose from D-glycero-beta-D-manno-heptose 7-phosphate: step 4/4. Its function is as follows. Catalyzes the interconversion between ADP-D-glycero-beta-D-manno-heptose and ADP-L-glycero-beta-D-manno-heptose via an epimerization at carbon 6 of the heptose. This is ADP-L-glycero-D-manno-heptose-6-epimerase from Hydrogenovibrio crunogenus (strain DSM 25203 / XCL-2) (Thiomicrospira crunogena).